Here is a 154-residue protein sequence, read N- to C-terminus: Superoxide dismutase [Cu-Zn] (154 aa).

Cu cation is bound by residues H47, H49, and H64. A disulfide bond links C58 and C147. Zn(2+) contacts are provided by H64, H72, H81, and D84. Cu cation is bound at residue H121. The segment covering 125-136 (DDLGKGGNEESL) has biased composition (basic and acidic residues). The tract at residues 125–144 (DDLGKGGNEESLKTGNAGPR) is disordered. R144 is a binding site for substrate.

It belongs to the Cu-Zn superoxide dismutase family. In terms of assembly, homodimer. It depends on Cu cation as a cofactor. Zn(2+) serves as cofactor.

Its subcellular location is the cytoplasm. The catalysed reaction is 2 superoxide + 2 H(+) = H2O2 + O2. Functionally, destroys radicals which are normally produced within the cells and which are toxic to biological systems. The polypeptide is Superoxide dismutase [Cu-Zn] (SOD1) (Candida glabrata (strain ATCC 2001 / BCRC 20586 / JCM 3761 / NBRC 0622 / NRRL Y-65 / CBS 138) (Yeast)).